A 146-amino-acid polypeptide reads, in one-letter code: MDRELNEHVMIERVEMIARLTAEGTCQERDREIALNLIAEIARGNLMKNNNFSVVFSAPPVGETFAKEGKVKVNITLDKDQKIGQPVIDAFQCELTKRIQSVFPSTRVTVKKGSMTGVELMGFDKDSDREALDSILQEVWEDESWR.

The protein belongs to the dinI family.

Functionally, the TUM protein is responsible for UV induction of the 186 prophage. The other three proteins modulate TUM activity. The polypeptide is SOS operon TUM protein (TUM) (Escherichia coli (Bacteriophage 186)).